Reading from the N-terminus, the 533-residue chain is Probable intron-encoded endonuclease 3 (533 aa).

The next 3 membrane-spanning stretches (helical) occupy residues 1–21 (MYLSIIILPLLGSIVAGFFGR), 30–50 (LITCLSVIITTGLAILAFFEV), and 81–101 (LTVAMLIPVLIISSLVHIYSI). Positions 1–108 (MYLSIIILPL…YSISYMSHDP (108 aa)) are ndh-5 exon 1 encoded. The interval 109 to 533 (RGRVRGKRVY…SISLLLGRRR (425 aa)) is ndh-5 intron 1 encoded.

This sequence in the N-terminal section; belongs to the complex I subunit 5 family. The protein in the C-terminal section; belongs to the LAGLIDADG endonuclease family.

It localises to the mitochondrion membrane. In terms of biological role, mitochondrial DNA endonuclease involved in intron homing. This chain is Probable intron-encoded endonuclease 3, found in Neurospora crassa (strain ATCC 24698 / 74-OR23-1A / CBS 708.71 / DSM 1257 / FGSC 987).